The sequence spans 314 residues: 4-hydroxy-3-methylbut-2-enyl diphosphate reductase (314 aa).

A [4Fe-4S] cluster-binding site is contributed by Cys-12. (2E)-4-hydroxy-3-methylbut-2-enyl diphosphate-binding residues include His-41 and His-74. The dimethylallyl diphosphate site is built by His-41 and His-74. Residues His-41 and His-74 each coordinate isopentenyl diphosphate. Cys-96 contacts [4Fe-4S] cluster. A (2E)-4-hydroxy-3-methylbut-2-enyl diphosphate-binding site is contributed by His-124. Position 124 (His-124) interacts with dimethylallyl diphosphate. Isopentenyl diphosphate is bound at residue His-124. Catalysis depends on Glu-126, which acts as the Proton donor. Position 167 (Thr-167) interacts with (2E)-4-hydroxy-3-methylbut-2-enyl diphosphate. Cys-197 is a binding site for [4Fe-4S] cluster. (2E)-4-hydroxy-3-methylbut-2-enyl diphosphate is bound by residues Ser-225, Ser-226, Asn-227, and Ser-269. 4 residues coordinate dimethylallyl diphosphate: Ser-225, Ser-226, Asn-227, and Ser-269. Residues Ser-225, Ser-226, Asn-227, and Ser-269 each coordinate isopentenyl diphosphate.

The protein belongs to the IspH family. Requires [4Fe-4S] cluster as cofactor.

The enzyme catalyses isopentenyl diphosphate + 2 oxidized [2Fe-2S]-[ferredoxin] + H2O = (2E)-4-hydroxy-3-methylbut-2-enyl diphosphate + 2 reduced [2Fe-2S]-[ferredoxin] + 2 H(+). It carries out the reaction dimethylallyl diphosphate + 2 oxidized [2Fe-2S]-[ferredoxin] + H2O = (2E)-4-hydroxy-3-methylbut-2-enyl diphosphate + 2 reduced [2Fe-2S]-[ferredoxin] + 2 H(+). It participates in isoprenoid biosynthesis; dimethylallyl diphosphate biosynthesis; dimethylallyl diphosphate from (2E)-4-hydroxy-3-methylbutenyl diphosphate: step 1/1. Its pathway is isoprenoid biosynthesis; isopentenyl diphosphate biosynthesis via DXP pathway; isopentenyl diphosphate from 1-deoxy-D-xylulose 5-phosphate: step 6/6. In terms of biological role, catalyzes the conversion of 1-hydroxy-2-methyl-2-(E)-butenyl 4-diphosphate (HMBPP) into a mixture of isopentenyl diphosphate (IPP) and dimethylallyl diphosphate (DMAPP). Acts in the terminal step of the DOXP/MEP pathway for isoprenoid precursor biosynthesis. The protein is 4-hydroxy-3-methylbut-2-enyl diphosphate reductase of Haemophilus influenzae (strain PittEE).